The sequence spans 56 residues: Ferredoxin (56 aa).

2 consecutive 4Fe-4S ferredoxin-type domains span residues 2–29 and 29–56; these read AYVI…AGDD and DKYV…PQPE. The [4Fe-4S] cluster site is built by Cys9, Cys12, Cys15, Cys19, Cys38, Cys41, Cys44, and Cys48.

It depends on [4Fe-4S] cluster as a cofactor.

Ferredoxins are iron-sulfur proteins that transfer electrons in a wide variety of metabolic reactions. This chain is Ferredoxin, found in Acetoanaerobium sticklandii (strain ATCC 12662 / DSM 519 / JCM 1433 / CCUG 9281 / NCIMB 10654 / HF) (Clostridium sticklandii).